A 407-amino-acid polypeptide reads, in one-letter code: Probable succinyl-diaminopimelate desuccinylase (407 aa).

Residue H72 coordinates Zn(2+). Residue D74 is part of the active site. Position 105 (D105) interacts with Zn(2+). Residue E139 is the Proton acceptor of the active site. Residues E140, E165, and H378 each contribute to the Zn(2+) site.

The protein belongs to the peptidase M20A family. Zn(2+) is required as a cofactor. It depends on Co(2+) as a cofactor.

It catalyses the reaction N-succinyl-(2S,6S)-2,6-diaminopimelate + H2O = (2S,6S)-2,6-diaminopimelate + succinate. It participates in amino-acid biosynthesis; L-lysine biosynthesis via DAP pathway; LL-2,6-diaminopimelate from (S)-tetrahydrodipicolinate (succinylase route): step 3/3. The polypeptide is Probable succinyl-diaminopimelate desuccinylase (dapE) (Staphylococcus aureus (strain MSSA476)).